The sequence spans 630 residues: YTH domain-containing family protein 1 (630 aa).

Disordered regions lie at residues 38–113 (DMTQ…YMQQ), 160–183 (YYPQ…AGPY), and 200–241 (QVGD…QSGH). A compositionally biased stretch (polar residues) spans 70-102 (PGQQQQHQYGSPPNTNGNAQPMPQAHGNNTMNS). The YTH domain maps to 382-590 (EKYFILKSLT…SVGRKLTGLF (209 aa)).

This sequence belongs to the YTHDF family. YTHDF1 subfamily.

It is found in the cytoplasm. Its subcellular location is the P-body. Its function is as follows. Specifically recognizes and binds N6-methyladenosine (m6A)-containing mRNAs, and regulates their stability. M6A is a modification present at internal sites of mRNAs and some non-coding RNAs and plays a role in mRNA stability and processing. Plays a role in pathogenicity towards plant host. The protein is YTH domain-containing family protein 1 of Pyricularia oryzae (strain 70-15 / ATCC MYA-4617 / FGSC 8958) (Rice blast fungus).